A 225-amino-acid polypeptide reads, in one-letter code: THAP domain-containing protein 1 A (225 aa).

The THAP-type zinc-finger motif lies at C5–H57. Positions V139–G194 form a coiled coil.

Belongs to the THAP1 family.

Its subcellular location is the nucleus. It is found in the nucleoplasm. In terms of biological role, DNA-binding transcription regulator that regulates endothelial cell proliferation and G1/S cell-cycle progression. Specifically binds the 5'-[AT]NTNN[GT]GGCA[AGT]-3' core DNA sequence and acts by modulating expression of pRB-E2F cell-cycle target genes. This chain is THAP domain-containing protein 1 A (thap1-a), found in Xenopus laevis (African clawed frog).